The sequence spans 353 residues: Quinolinate synthase (353 aa).

The iminosuccinate site is built by His-47 and Ser-68. Residue Cys-113 participates in [4Fe-4S] cluster binding. Residues Tyr-139–Asn-141 and Ser-156 contribute to the iminosuccinate site. Cys-200 serves as a coordination point for [4Fe-4S] cluster. Residues His-226–Glu-228 and Thr-243 contribute to the iminosuccinate site. Cys-297 lines the [4Fe-4S] cluster pocket.

It belongs to the quinolinate synthase family. Type 1 subfamily. It depends on [4Fe-4S] cluster as a cofactor.

Its subcellular location is the cytoplasm. It carries out the reaction iminosuccinate + dihydroxyacetone phosphate = quinolinate + phosphate + 2 H2O + H(+). It functions in the pathway cofactor biosynthesis; NAD(+) biosynthesis; quinolinate from iminoaspartate: step 1/1. Its function is as follows. Catalyzes the condensation of iminoaspartate with dihydroxyacetone phosphate to form quinolinate. The chain is Quinolinate synthase from Erwinia tasmaniensis (strain DSM 17950 / CFBP 7177 / CIP 109463 / NCPPB 4357 / Et1/99).